A 498-amino-acid polypeptide reads, in one-letter code: MMLSSTSLYAAIDLGSNSFHMLVVREVAGSIQTLARIKRKVRLAAGLDNQNHLSQEAMERGWQCLKLFSERLQDIPLDQIRVVATATLRLASNADEFLRTATEILGCPIQVISGEEEARLIYHGVAHTTGGPEQRLVVDIGGGSTELVTGNGAQANILVSLSMGCVTWLERYFGDRHLAKENFERAELAAHEMIKPVAQRFREHGWQVCVGASGTVQALQEIMVAQGMDELITLAKLQQLKQRAIQCGKLEELEIPGLTLERALVFPSGLSILIAIFQELSIESMTLAGGALREGLVYGMLHLPVEQDIRRRTLRNLQRRYLLDTEQAKRVSCLADNFFLQVEKEWHLDGRCREFLQNACLIHEIGLSVDFKHAPQHAAYLIRNLDLPGFTPAQKLLLSALLQNQSDTIDLSLLNQQNALPADMAQHLCRLLRLAIIFSSRRRDDTLPAVRLRADNNALYVLVPQGWLEQHPYRAEALEQESHWQSYVQWPLLLEELS.

The protein belongs to the GppA/Ppx family. GppA subfamily.

It catalyses the reaction guanosine 3'-diphosphate 5'-triphosphate + H2O = guanosine 3',5'-bis(diphosphate) + phosphate + H(+). The protein operates within purine metabolism; ppGpp biosynthesis; ppGpp from GTP: step 2/2. Catalyzes the conversion of pppGpp to ppGpp. Guanosine pentaphosphate (pppGpp) is a cytoplasmic signaling molecule which together with ppGpp controls the 'stringent response', an adaptive process that allows bacteria to respond to amino acid starvation, resulting in the coordinated regulation of numerous cellular activities. The sequence is that of Guanosine-5'-triphosphate,3'-diphosphate pyrophosphatase from Yersinia pseudotuberculosis serotype O:1b (strain IP 31758).